The sequence spans 123 residues: DNA-directed RNA polymerase I subunit RPA12 (123 aa).

Zn(2+) is bound by residues C17, C20, C35, C38, C84, and C87. Residues 17-38 form a C4-type zinc finger; sequence CPDCGSVLPLPGVQDAVACTRC. The TFIIS-type zinc finger occupies 80–120; the sequence is VDRRCSRCGHEGMAYHTRQMRSADEGQTVFYTCTNCKFQEK. The Hairpin signature appears at 103-104; that stretch reads DE. The Zn(2+) site is built by C112 and C115.

This sequence belongs to the archaeal RpoM/eukaryotic RPA12/RPB9/RPC11 RNA polymerase family. In terms of assembly, component of the RNA polymerase I (Pol I) complex consisting of at least 13 subunits.

It localises to the nucleus. It is found in the nucleolus. In terms of biological role, core component of RNA polymerase I (Pol I), a DNA-dependent RNA polymerase which synthesizes ribosomal RNA precursors using the four ribonucleoside triphosphates as substrates. Can mediate Pol I proofreading of the nascent RNA transcript. Anchors into the Pol I active site to monitor transcription fidelity and cleave mis-incorporated 5'-ribonucleotides. In Bos taurus (Bovine), this protein is DNA-directed RNA polymerase I subunit RPA12.